A 92-amino-acid polypeptide reads, in one-letter code: Small ribosomal subunit protein uS19 (92 aa).

It belongs to the universal ribosomal protein uS19 family.

Protein S19 forms a complex with S13 that binds strongly to the 16S ribosomal RNA. The protein is Small ribosomal subunit protein uS19 of Vibrio atlanticus (strain LGP32) (Vibrio splendidus (strain Mel32)).